The following is a 112-amino-acid chain: Ferredoxin-2 (112 aa).

2 consecutive 4Fe-4S ferredoxin-type domains span residues Thr-2–Glu-30 and Asn-31–Glu-60. Residues Cys-9 and Cys-17 each contribute to the [3Fe-4S] cluster site. Cys-21, Cys-40, Cys-43, and Cys-46 together coordinate [4Fe-4S] cluster. Position 50 (Cys-50) interacts with [3Fe-4S] cluster. Positions Asp-85–Tyr-103 are enriched in basic and acidic residues. Positions Asp-85–Asp-112 are disordered.

It depends on [4Fe-4S] cluster as a cofactor. [3Fe-4S] cluster serves as cofactor.

Its function is as follows. Ferredoxins are iron-sulfur proteins that transfer electrons in a wide variety of metabolic reactions. This is Ferredoxin-2 (fdxA) from Rhodobacter capsulatus (strain ATCC BAA-309 / NBRC 16581 / SB1003).